A 238-amino-acid polypeptide reads, in one-letter code: Ribonuclease 3 (238 aa).

An RNase III domain is found at 4-127 (IEEFEKRLGY…TMGAIYLETG (124 aa)). A Mg(2+)-binding site is contributed by Glu-40. Residue Asp-44 is part of the active site. Positions 113 and 116 each coordinate Mg(2+). Residue Glu-116 is part of the active site. The DRBM domain occupies 154–223 (DYKTALQELT…ARIALEIFHR (70 aa)).

It belongs to the ribonuclease III family. In terms of assembly, homodimer. The cofactor is Mg(2+).

Its subcellular location is the cytoplasm. It carries out the reaction Endonucleolytic cleavage to 5'-phosphomonoester.. Digests double-stranded RNA. Involved in the processing of primary rRNA transcript to yield the immediate precursors to the large and small rRNAs (23S and 16S). Processes some mRNAs, and tRNAs when they are encoded in the rRNA operon. Processes pre-crRNA and tracrRNA of type II CRISPR loci if present in the organism. The chain is Ribonuclease 3 from Wolinella succinogenes (strain ATCC 29543 / DSM 1740 / CCUG 13145 / JCM 31913 / LMG 7466 / NCTC 11488 / FDC 602W) (Vibrio succinogenes).